The chain runs to 66 residues: Protein I177L (66 aa).

The protein belongs to the asfivirus I177L family.

It localises to the virion. This African swine fever virus (isolate Tick/Malawi/Lil 20-1/1983) (ASFV) protein is Protein I177L.